A 146-amino-acid polypeptide reads, in one-letter code: Large-conductance mechanosensitive channel (146 aa).

Helical transmembrane passes span 15–35 and 81–101; these read VSLA…TSLV and GIFI…FIII.

It belongs to the MscL family. In terms of assembly, homopentamer.

The protein localises to the cell membrane. Channel that opens in response to stretch forces in the membrane lipid bilayer. May participate in the regulation of osmotic pressure changes within the cell. The sequence is that of Large-conductance mechanosensitive channel from Clostridium beijerinckii (strain ATCC 51743 / NCIMB 8052) (Clostridium acetobutylicum).